We begin with the raw amino-acid sequence, 386 residues long: Protein phosphatase methylesterase 1 (386 aa).

Positions 1–38 (MSALEKSMHLGRLPSRPPLPGSGGSQSGAKMRMGPGRK) are disordered. A Phosphoserine modification is found at Ser-15. Arg-16 carries the asymmetric dimethylarginine; alternate modification. Arg-16 is modified (omega-N-methylarginine; alternate). Active-site residues include Ser-156 and Asp-181. Positions 255 to 265 (IEEEEEDEEGS) are enriched in acidic residues. The interval 255–280 (IEEEEEDEEGSESVNKRKKEDDMETK) is disordered. Residues 268 to 280 (VNKRKKEDDMETK) are compositionally biased toward basic and acidic residues. His-349 is an active-site residue.

The protein belongs to the AB hydrolase superfamily. In terms of assembly, binds PPP2CA and PPP2CB. In terms of processing, phosphorylated by SIK1 following increases in intracellular sodium, leading to dissociation from the protein phosphatase 2A (PP2A) complex and subsequent dephosphorylation of sodium/potassium-transporting ATPase ATP1A1. In terms of tissue distribution, ubiquitous. Highly expressed in testis and brain.

The catalysed reaction is [phosphatase 2A protein]-C-terminal L-leucine methyl ester + H2O = [phosphatase 2A protein]-C-terminal L-leucine + methanol + H(+). Demethylates proteins that have been reversibly carboxymethylated. Demethylates PPP2CB (in vitro) and PPP2CA. Binding to PPP2CA displaces the manganese ion and inactivates the enzyme. The polypeptide is Protein phosphatase methylesterase 1 (Ppme1) (Mus musculus (Mouse)).